We begin with the raw amino-acid sequence, 581 residues long: Membrane protein insertase YidC (581 aa).

A helical membrane pass occupies residues 7–27 (ILIVALAVVSYLMVLQWNEDY). A disordered region spans residues 41-62 (AATPALPDTPADTASTGGDDIP). 5 consecutive transmembrane segments (helical) span residues 365–385 (TVDYGFLWFLAQPIFWLLEVI), 388–408 (LLGNWGWSIIVLTIIIKLIFF), 458–478 (LGGCLPILVQMPVFLALYWVL), 489–509 (WMFWITDLSIKDPFFILPIIM), and 536–556 (PIIFTFFFLWFPAGLVLYWVV).

It belongs to the OXA1/ALB3/YidC family. Type 1 subfamily. As to quaternary structure, interacts with the Sec translocase complex via SecD. Specifically interacts with transmembrane segments of nascent integral membrane proteins during membrane integration.

It is found in the cell inner membrane. Required for the insertion and/or proper folding and/or complex formation of integral membrane proteins into the membrane. Involved in integration of membrane proteins that insert both dependently and independently of the Sec translocase complex, as well as at least some lipoproteins. Aids folding of multispanning membrane proteins. This chain is Membrane protein insertase YidC, found in Ectopseudomonas mendocina (strain ymp) (Pseudomonas mendocina).